The primary structure comprises 115 residues: MNMILTLFINITLSLCLISIAFWLPQLNAYTEKASPYECGFDPMSSARLPFSMKFFLVGITFLLFDLEIALLLPLPWAIHSTNSYLTMTVSFMLVSALALGLAYEWLNKGLEWTE.

Helical transmembrane passes span 4 to 24, 55 to 75, and 84 to 104; these read ILTLFINITLSLCLISIAFWL, FFLVGITFLLFDLEIALLLPL, and SYLTMTVSFMLVSALALGLAY.

It belongs to the complex I subunit 3 family. As to quaternary structure, core subunit of respiratory chain NADH dehydrogenase (Complex I) which is composed of 45 different subunits. Interacts with TMEM186. Interacts with TMEM242.

Its subcellular location is the mitochondrion inner membrane. The enzyme catalyses a ubiquinone + NADH + 5 H(+)(in) = a ubiquinol + NAD(+) + 4 H(+)(out). In terms of biological role, core subunit of the mitochondrial membrane respiratory chain NADH dehydrogenase (Complex I) which catalyzes electron transfer from NADH through the respiratory chain, using ubiquinone as an electron acceptor. Essential for the catalytic activity of complex I. In Necromys lactens (Rufous-bellied bolo mouse), this protein is NADH-ubiquinone oxidoreductase chain 3.